A 330-amino-acid chain; its full sequence is Mitochondrial glycine transporter (330 aa).

Solcar repeat units follow at residues 11-94 (SSSY…LRQN), 122-206 (LSNL…LKKR), and 234-318 (TSAS…LIRR). The next 6 membrane-spanning stretches (helical) occupy residues 17 to 42 (FTAGLGSGILSAVLLQPADLLKTRLQ), 69 to 95 (GTVPSALRTGFGSAIYFTSLNALRQNV), 128 to 153 (LTTGAVARAGAGFVLMPMTIIKVRYE), 181 to 204 (GFGATAIRDAPYAGLYVLFYEQLK), 238 to 264 (INFGSGVLAAGLATAITNPFDAIKTRI), and 293 to 311 (GLGLRMGRKAVSSALAWTI).

It belongs to the mitochondrial carrier (TC 2.A.29) family. SLC25A38 subfamily.

It is found in the mitochondrion inner membrane. It catalyses the reaction glycine(in) = glycine(out). Mitochondrial glycine transporter that imports glycine into the mitochondrial matrix. Plays an important role in providing glycine for the first enzymatic step in heme biosynthesis, the condensation of glycine with succinyl-CoA to produce 5-aminolevulinate (ALA) in the mitochondrial matrix. In Sclerotinia sclerotiorum (strain ATCC 18683 / 1980 / Ss-1) (White mold), this protein is Mitochondrial glycine transporter.